The following is a 141-amino-acid chain: Hemoglobin subunit alpha (141 aa).

The 141-residue stretch at 1–141 (VLSGTDKSNI…VSTVLTSKYR (141 aa)) folds into the Globin domain. Serine 3 is subject to Phosphoserine. Residues lysine 7 and lysine 11 each carry the N6-succinyllysine modification. An N6-acetyllysine; alternate modification is found at lysine 16. The residue at position 16 (lysine 16) is an N6-succinyllysine; alternate. Position 24 is a phosphotyrosine (tyrosine 24). Phosphoserine is present on serine 35. Residue lysine 40 is modified to N6-succinyllysine. Serine 49 is modified (phosphoserine). Histidine 58 is a binding site for O2. Histidine 87 lines the heme b pocket. Serine 102 bears the Phosphoserine mark. At threonine 108 the chain carries Phosphothreonine. Serine 124 is modified (phosphoserine). Phosphothreonine is present on residues threonine 134 and threonine 137. Serine 138 carries the phosphoserine modification.

The protein belongs to the globin family. In terms of assembly, heterotetramer of two alpha chains and two beta chains. As to expression, red blood cells.

Functionally, involved in oxygen transport from the lung to the various peripheral tissues. Its function is as follows. Hemopressin acts as an antagonist peptide of the cannabinoid receptor CNR1. Hemopressin-binding efficiently blocks cannabinoid receptor CNR1 and subsequent signaling. In Talpa europaea (European mole), this protein is Hemoglobin subunit alpha (HBA).